Here is a 466-residue protein sequence, read N- to C-terminus: GVGFKAGVKDYKLTYYTPEYETKDTDILAAFRVTPQPGVPPEEAGAAVAAESSTGTWTTVWTDGLTSLDRYKGRCYQIEPVAGEENQYIAYVAYPLDLFEEGSVTNMFTSIVGNVFGFKALRALRLEDLRIPPAYVKTFQGPPHGIQVERDKLNKYGRPLLGCTIKPKLGLSAKNYGRAVYECLRGGLDFTKDDENVNSQPFMRWRDRFLFCAEAIYKSQAETGEIKGHYLNATAGTCEEMIKRAVFARELGVPIVMHDYLTGGFTANTSLAHYCRDNGLLLHIHRAMHAVIDRQKNHGIHFRVLAKALRMSGGDHIHAGTVVGKLEGEREITLGFVDLLRDDFIEKDRSRGIYFTQDWVSLPGVLPVASGGIHVWHMPALTEIFGDDSVLQFGGGTLGHPWGNAPGAVANRVALEACVQARNEGRDLAREGNEIIREASKWSPELAAACEVWKEIKFEFEAMDTL.

Lys5 carries the N6,N6,N6-trimethyllysine modification. Substrate is bound by residues Asn114 and Thr164. Lys166 acts as the Proton acceptor in catalysis. A substrate-binding site is contributed by Lys168. Lys192, Asp194, and Glu195 together coordinate Mg(2+). An N6-carboxylysine modification is found at Lys192. The active-site Proton acceptor is the His285. Substrate contacts are provided by Arg286, His318, and Ser370.

The protein belongs to the RuBisCO large chain family. Type I subfamily. In terms of assembly, heterohexadecamer of 8 large chains and 8 small chains; disulfide-linked. The disulfide link is formed within the large subunit homodimers. Requires Mg(2+) as cofactor. The disulfide bond which can form in the large chain dimeric partners within the hexadecamer appears to be associated with oxidative stress and protein turnover.

The protein localises to the plastid. It is found in the chloroplast. The enzyme catalyses 2 (2R)-3-phosphoglycerate + 2 H(+) = D-ribulose 1,5-bisphosphate + CO2 + H2O. It catalyses the reaction D-ribulose 1,5-bisphosphate + O2 = 2-phosphoglycolate + (2R)-3-phosphoglycerate + 2 H(+). In terms of biological role, ruBisCO catalyzes two reactions: the carboxylation of D-ribulose 1,5-bisphosphate, the primary event in carbon dioxide fixation, as well as the oxidative fragmentation of the pentose substrate in the photorespiration process. Both reactions occur simultaneously and in competition at the same active site. This is Ribulose bisphosphate carboxylase large chain from Coriaria myrtifolia (Tanner's sumac).